Here is a 492-residue protein sequence, read N- to C-terminus: Catalase isozyme 2 (492 aa).

Catalysis depends on residues His65 and Asn138. A heme-binding site is contributed by Tyr348.

This sequence belongs to the catalase family. As to quaternary structure, homotetramer. Heme is required as a cofactor.

It is found in the peroxisome. Its subcellular location is the glyoxysome. It catalyses the reaction 2 H2O2 = O2 + 2 H2O. In terms of biological role, occurs in almost all aerobically respiring organisms and serves to protect cells from the toxic effects of hydrogen peroxide. The protein is Catalase isozyme 2 (CAT2) of Solanum tuberosum (Potato).